The primary structure comprises 103 residues: Large ribosomal subunit protein bL21 (103 aa).

The protein belongs to the bacterial ribosomal protein bL21 family. As to quaternary structure, part of the 50S ribosomal subunit. Contacts protein L20.

Functionally, this protein binds to 23S rRNA in the presence of protein L20. The sequence is that of Large ribosomal subunit protein bL21 from Cupriavidus pinatubonensis (strain JMP 134 / LMG 1197) (Cupriavidus necator (strain JMP 134)).